Reading from the N-terminus, the 166-residue chain is Large ribosomal subunit protein uL10 (166 aa).

Belongs to the universal ribosomal protein uL10 family. In terms of assembly, part of the ribosomal stalk of the 50S ribosomal subunit. The N-terminus interacts with L11 and the large rRNA to form the base of the stalk. The C-terminus forms an elongated spine to which L12 dimers bind in a sequential fashion forming a multimeric L10(L12)X complex.

Its function is as follows. Forms part of the ribosomal stalk, playing a central role in the interaction of the ribosome with GTP-bound translation factors. The polypeptide is Large ribosomal subunit protein uL10 (rplJ) (Streptococcus pyogenes serotype M1).